A 134-amino-acid chain; its full sequence is UPF0357 protein YCL012C (134 aa).

A signal peptide spans M1 to A23. 2 positions are modified to phosphoserine: S71 and S74. A Glycyl lysine isopeptide (Lys-Gly) (interchain with G-Cter in ubiquitin) cross-link involves residue K86.

It belongs to the UPF0357 family.

The sequence is that of UPF0357 protein YCL012C from Saccharomyces cerevisiae (strain ATCC 204508 / S288c) (Baker's yeast).